A 126-amino-acid polypeptide reads, in one-letter code: MAILGLGTDIVEISRIQAVVERTGERLARRILSPSEWQHYQQHQQPVRFLAKRFAVKEAAAKAFGTGIRNGLAFNQFEVVNDALGKPTLRLHSRAAELAVELGVKSLHVTLADERRYACATVIIES.

Asp-9 and Glu-58 together coordinate Mg(2+).

It belongs to the P-Pant transferase superfamily. AcpS family. Mg(2+) serves as cofactor.

The protein localises to the cytoplasm. The catalysed reaction is apo-[ACP] + CoA = holo-[ACP] + adenosine 3',5'-bisphosphate + H(+). Functionally, transfers the 4'-phosphopantetheine moiety from coenzyme A to a Ser of acyl-carrier-protein. The sequence is that of Holo-[acyl-carrier-protein] synthase from Yersinia pestis bv. Antiqua (strain Angola).